The primary structure comprises 546 residues: Immunoglobulin-like domain-containing receptor 1 (546 aa).

Residues 1–23 form the signal peptide; the sequence is MAWPKLPAPWLLLCTWLPAGCLS. One can recognise an Ig-like V-type domain in the interval 24–162; it reads LLVTVQHTER…TSGDPDKEVK (139 aa). The Extracellular portion of the chain corresponds to 24–167; it reads LLVTVQHTER…DKEVKLIVLH (144 aa). Cysteine 45 and cysteine 145 form a disulfide bridge. The helical transmembrane segment at 168–188 threads the bilayer; it reads WLTVIFIILGALLLLLLIGVC. The Cytoplasmic segment spans residues 189–546; sequence WCQCCPQYCC…SSHSGRSVVI (358 aa). The segment at 399–546 is disordered; the sequence is WSGRHRSSRL…SSHSGRSVVI (148 aa). Over residues 442 to 457 the composition is skewed to basic and acidic residues; sequence RCQERPRRPSPRESTQ. Residues 458-467 are compositionally biased toward basic residues; that stretch reads RHGRRRRHRS. 2 positions are modified to phosphoserine: serine 499 and serine 501. Over residues 527–539 the composition is skewed to basic and acidic residues; sequence GSVERRSEKDSSH.

This sequence belongs to the immunoglobulin superfamily. LISCH7 family. In terms of assembly, homooligomer. Interacts with MARVELD2 and OCLN; the interaction is required to recruit MARVELD2 to tricellular contacts. Interacts (via C-terminus) with TRA2A, TRA2B and SRSF1. Interacts with PLSCR1. In terms of tissue distribution, mainly expressed in prostate and to a lower extent in testis, pancreas, kidney, heart and liver.

Its subcellular location is the cell membrane. The protein localises to the cell junction. The protein resides in the tight junction. It localises to the cytoplasm. It is found in the cytosol. Its function is as follows. Maintains epithelial barrier function by recruiting MARVELD2/tricellulin to tricellular tight junctions (tTJs). Crucial for normal hearing by maintaining the structural and functional integrity of tTJs, which are critical for the survival of auditory neurosensory HCs. Mediates fatty acids and lipoproteins-stimulated CCK/cholecystokinin secretion in the small intestine. In the inner ear, may regulate alternative pre-mRNA splicing via binding to TRA2A, TRA2B and SRSF1. Functionally, (Microbial infection) Promotes influenza virus infection by inhibiting viral nucleoprotein NP binding to PLSCR1 and thereby PLSCR1-mediated antiviral activity. The polypeptide is Immunoglobulin-like domain-containing receptor 1 (Homo sapiens (Human)).